Here is a 133-residue protein sequence, read N- to C-terminus: ATP synthase epsilon chain, chloroplastic (133 aa).

Belongs to the ATPase epsilon chain family. As to quaternary structure, F-type ATPases have 2 components, CF(1) - the catalytic core - and CF(0) - the membrane proton channel. CF(1) has five subunits: alpha(3), beta(3), gamma(1), delta(1), epsilon(1). CF(0) has three main subunits: a, b and c.

Its subcellular location is the plastid. It is found in the chloroplast thylakoid membrane. Its function is as follows. Produces ATP from ADP in the presence of a proton gradient across the membrane. The protein is ATP synthase epsilon chain, chloroplastic of Lactuca sativa (Garden lettuce).